A 71-amino-acid polypeptide reads, in one-letter code: Serine palmitoyltransferase small subunit A (71 aa).

The Cytoplasmic portion of the chain corresponds to 1-12 (MAGMALARAWKQ). The helical transmembrane segment at 13-29 (MSWFYYQYLLVTALYML) threads the bilayer. Residues 30-34 (EPWER) are Lumenal-facing. A helical membrane pass occupies residues 35–57 (TVFNSMLVSVVGMALYTGYVFMP). Over 58–71 (QHIMAILHYFEIVQ) the chain is Cytoplasmic.

Belongs to the SPTSS family. SPTSSA subfamily. As to quaternary structure, component of the serine palmitoyltransferase (SPT) complex, which is composed of SPTLC1, SPTLC2 or SPTLC3 and SPTSSA or SPTSSB. The heterodimer consisting of SPTLC1 and SPTLC2/SPTLC3 forms the catalytic core of the enzyme, while SPTSSA or SPTSSB subunits determine substrate specificity. SPT also interacts with ORMDL proteins, especially ORMDL3, which negatively regulate SPT activity in the presence of ceramides. Interacts with MBOAT7; the interaction plays a role in MBOAT7 localization to mitochondria-associated membranes.

It localises to the endoplasmic reticulum membrane. It participates in lipid metabolism; sphingolipid metabolism. Functionally, component of the serine palmitoyltransferase multisubunit enzyme (SPT) that catalyzes the initial and rate-limiting step in sphingolipid biosynthesis by condensing L-serine and activated acyl-CoA (most commonly palmitoyl-CoA) to form long-chain bases. The SPT complex is composed of SPTLC1, SPTLC2 or SPTLC3 and SPTSSA or SPTSSB. Within this complex, the heterodimer consisting of SPTLC1 and SPTLC2/SPTLC3 forms the catalytic core. Within the SPT complex, SPTSSA stimulates the catalytic activity and plays a role in substrate specificity, which depends upon the overall complex composition. The SPTLC1-SPTLC2-SPTSSA complex shows a strong preference for C16-CoA substrate, while the SPTLC1-SPTLC3-SPTSSA isozyme uses both C14-CoA and C16-CoA as substrates, with a slight preference for C14-CoA. Independently of its action as a SPT component, may be involved in MBOAT7 localization to mitochondria-associated membranes, a membrane bridge between the endoplasmic reticulum and mitochondria, may hence affect MBOAT7-catalyzed incorporation of arachidonic acid into phosphatidylinositol. The sequence is that of Serine palmitoyltransferase small subunit A from Mus musculus (Mouse).